The following is a 207-amino-acid chain: MYDYIRGILTYMSSGTLVIECQGLGFNIFAPDRWLIELSGQLHREVVVYTYTVVRETEHVLYGFSSRRERECFRMLISFSGVGPKTGLAILNTFSLSKLCSIARAEDVRAIASVPGIGKKTAEKLMVDLKQKLPDLLPLDSKAIASWESVKPSCMDEGIQALAALGYSKPSAERMIAEAMSELPENASLAEILPIALKKNLQGLNKS.

A domain I region spans residues 1–65 (MYDYIRGILT…ETEHVLYGFS (65 aa)). Positions 66–144 (SRRERECFRM…DLLPLDSKAI (79 aa)) are domain II. The interval 145-155 (ASWESVKPSCM) is flexible linker. The interval 155–207 (MDEGIQALAALGYSKPSAERMIAEAMSELPENASLAEILPIALKKNLQGLNKS) is domain III.

The protein belongs to the RuvA family. In terms of assembly, homotetramer. Forms an RuvA(8)-RuvB(12)-Holliday junction (HJ) complex. HJ DNA is sandwiched between 2 RuvA tetramers; dsDNA enters through RuvA and exits via RuvB. An RuvB hexamer assembles on each DNA strand where it exits the tetramer. Each RuvB hexamer is contacted by two RuvA subunits (via domain III) on 2 adjacent RuvB subunits; this complex drives branch migration. In the full resolvosome a probable DNA-RuvA(4)-RuvB(12)-RuvC(2) complex forms which resolves the HJ.

Its subcellular location is the cytoplasm. Functionally, the RuvA-RuvB-RuvC complex processes Holliday junction (HJ) DNA during genetic recombination and DNA repair, while the RuvA-RuvB complex plays an important role in the rescue of blocked DNA replication forks via replication fork reversal (RFR). RuvA specifically binds to HJ cruciform DNA, conferring on it an open structure. The RuvB hexamer acts as an ATP-dependent pump, pulling dsDNA into and through the RuvAB complex. HJ branch migration allows RuvC to scan DNA until it finds its consensus sequence, where it cleaves and resolves the cruciform DNA. This chain is Holliday junction branch migration complex subunit RuvA, found in Chlamydia caviae (strain ATCC VR-813 / DSM 19441 / 03DC25 / GPIC) (Chlamydophila caviae).